We begin with the raw amino-acid sequence, 114 residues long: SOSS complex subunit C homolog (114 aa).

The span at 1–10 (MAFQQHGNQE) shows a compositional bias: polar residues. Positions 1-61 (MAFQQHGNQE…AGNTSASRIH (61 aa)) are disordered.

It belongs to the SOSS-C family.

In Nematostella vectensis (Starlet sea anemone), this protein is SOSS complex subunit C homolog.